A 79-amino-acid chain; its full sequence is Dolichol phosphate-mannose biosynthesis regulatory protein (79 aa).

Helical transmembrane passes span 8-28 and 50-70; these read IGFVMVLFRIFVFGYYTTWVI and IIIPLVLLVVGITAIGTFLGL.

This sequence belongs to the DPM2 family. As to quaternary structure, component of the dolichol-phosphate mannose (DPM) synthase complex composed of dpm1, dpm2 and dpm3.

The protein localises to the endoplasmic reticulum membrane. It functions in the pathway protein modification; protein glycosylation. Regulates the biosynthesis of dolichol phosphate-mannose. Regulatory subunit of the dolichol-phosphate mannose (DPM) synthase complex; essential for the ER localization and stable expression of dpm1. In Dictyostelium discoideum (Social amoeba), this protein is Dolichol phosphate-mannose biosynthesis regulatory protein (dpm2-1).